Consider the following 403-residue polypeptide: Imidazolonepropionase (403 aa).

Fe(3+) is bound by residues His69 and His71. 2 residues coordinate Zn(2+): His69 and His71. 4-imidazolone-5-propanoate-binding residues include Arg78, Tyr141, and His174. Tyr141 lines the N-formimidoyl-L-glutamate pocket. His239 is a Fe(3+) binding site. His239 lines the Zn(2+) pocket. Gln242 lines the 4-imidazolone-5-propanoate pocket. Asp314 contacts Fe(3+). Asp314 serves as a coordination point for Zn(2+). The N-formimidoyl-L-glutamate site is built by Asn316 and Gly318. Residue Ser319 coordinates 4-imidazolone-5-propanoate.

Belongs to the metallo-dependent hydrolases superfamily. HutI family. Zn(2+) serves as cofactor. It depends on Fe(3+) as a cofactor.

It localises to the cytoplasm. The enzyme catalyses 4-imidazolone-5-propanoate + H2O = N-formimidoyl-L-glutamate. It functions in the pathway amino-acid degradation; L-histidine degradation into L-glutamate; N-formimidoyl-L-glutamate from L-histidine: step 3/3. In terms of biological role, catalyzes the hydrolytic cleavage of the carbon-nitrogen bond in imidazolone-5-propanoate to yield N-formimidoyl-L-glutamate. It is the third step in the universal histidine degradation pathway. The chain is Imidazolonepropionase from Legionella pneumophila (strain Lens).